Here is a 504-residue protein sequence, read N- to C-terminus: UDP-N-acetylmuramoylalanine--D-glutamate ligase (504 aa).

132 to 138 is an ATP binding site; sequence GTNGKTT. Residues 284 to 310 are disordered; it reads AQDRDATDEPAPTRRRKSESTAPPDIG.

This sequence belongs to the MurCDEF family.

It is found in the cytoplasm. The enzyme catalyses UDP-N-acetyl-alpha-D-muramoyl-L-alanine + D-glutamate + ATP = UDP-N-acetyl-alpha-D-muramoyl-L-alanyl-D-glutamate + ADP + phosphate + H(+). It functions in the pathway cell wall biogenesis; peptidoglycan biosynthesis. Functionally, cell wall formation. Catalyzes the addition of glutamate to the nucleotide precursor UDP-N-acetylmuramoyl-L-alanine (UMA). This chain is UDP-N-acetylmuramoylalanine--D-glutamate ligase, found in Paraburkholderia phymatum (strain DSM 17167 / CIP 108236 / LMG 21445 / STM815) (Burkholderia phymatum).